The sequence spans 266 residues: Tryptophan synthase alpha chain (266 aa).

Residues glutamate 51 and aspartate 62 each act as proton acceptor in the active site.

It belongs to the TrpA family. As to quaternary structure, tetramer of two alpha and two beta chains.

It carries out the reaction (1S,2R)-1-C-(indol-3-yl)glycerol 3-phosphate + L-serine = D-glyceraldehyde 3-phosphate + L-tryptophan + H2O. It functions in the pathway amino-acid biosynthesis; L-tryptophan biosynthesis; L-tryptophan from chorismate: step 5/5. In terms of biological role, the alpha subunit is responsible for the aldol cleavage of indoleglycerol phosphate to indole and glyceraldehyde 3-phosphate. In Thermosynechococcus vestitus (strain NIES-2133 / IAM M-273 / BP-1), this protein is Tryptophan synthase alpha chain.